Here is a 390-residue protein sequence, read N- to C-terminus: Chorismate synthase 1 (390 aa).

2 residues coordinate NADP(+): Arg39 and Arg45. The interval 95–117 (EQEEKEMKRKVTKPRPGHADLNG) is disordered. Residues 132-134 (RSS), 253-254 (NA), Gly298, 313-317 (KPIPT), and Arg339 each bind FMN.

Belongs to the chorismate synthase family. As to quaternary structure, homotetramer. It depends on FMNH2 as a cofactor.

The enzyme catalyses 5-O-(1-carboxyvinyl)-3-phosphoshikimate = chorismate + phosphate. It functions in the pathway metabolic intermediate biosynthesis; chorismate biosynthesis; chorismate from D-erythrose 4-phosphate and phosphoenolpyruvate: step 7/7. Functionally, catalyzes the anti-1,4-elimination of the C-3 phosphate and the C-6 proR hydrogen from 5-enolpyruvylshikimate-3-phosphate (EPSP) to yield chorismate, which is the branch point compound that serves as the starting substrate for the three terminal pathways of aromatic amino acid biosynthesis. This reaction introduces a second double bond into the aromatic ring system. The protein is Chorismate synthase 1 of Bacillus thuringiensis (strain Al Hakam).